We begin with the raw amino-acid sequence, 767 residues long: Serine/threonine-protein kinase DCLK2 (767 aa).

The tract at residues methionine 1–leucine 44 is disordered. The segment covering isoleucine 7–proline 19 has biased composition (basic and acidic residues). A compositionally biased stretch (low complexity) spans arginine 24–glycine 43. At threonine 61 the chain carries Phosphothreonine. 2 Doublecortin domains span residues lysine 72–threonine 158 and lysine 196–aspartate 279. Residues lysine 301–serine 311 are compositionally biased toward low complexity. The tract at residues lysine 301–proline 391 is disordered. Residues serine 327–glycine 338 show a composition bias toward polar residues. Over residues threonine 339–serine 362 the composition is skewed to low complexity. Positions isoleucine 369 to asparagine 380 are enriched in polar residues. Position 377 is a phosphoserine (serine 377). In terms of domain architecture, Protein kinase spans tyrosine 409–valine 666. Residues isoleucine 415–valine 423 and lysine 438 contribute to the ATP site. Catalysis depends on aspartate 530, which acts as the Proton acceptor. A Phosphoserine modification is found at serine 662. Threonine 681 bears the Phosphothreonine mark. Residues histidine 721 to serine 734 are compositionally biased toward basic and acidic residues. The segment at histidine 721–aspartate 767 is disordered. Positions alanine 738–proline 751 are enriched in pro residues.

This sequence belongs to the protein kinase superfamily. CAMK Ser/Thr protein kinase family. CaMK subfamily. In terms of assembly, interacts with MAPK8IP1/JIP-1, MAPK8IP2/JIP-2, MAPK9/JNK2, PPP1R9B/NEURABIN-2 and actin. Binds to and stabilizes microtubules; binding affinity is strongly reduced by autophosphorylation. Post-translationally, autophosphorylated.

The protein localises to the cytoplasm. It localises to the cytoskeleton. The catalysed reaction is L-seryl-[protein] + ATP = O-phospho-L-seryl-[protein] + ADP + H(+). The enzyme catalyses L-threonyl-[protein] + ATP = O-phospho-L-threonyl-[protein] + ADP + H(+). Functionally, protein kinase with a significantly reduced Ca(2+)+/CAM affinity and dependence compared to other members of the CaMK family. May play a role in the down-regulation of CRE-dependent gene activation probably by phosphorylation of the CREB coactivator CRTC2/TORC2 and the resulting retention of TORC2 in the cytoplasm. The sequence is that of Serine/threonine-protein kinase DCLK2 (Dclk2) from Rattus norvegicus (Rat).